Reading from the N-terminus, the 190-residue chain is Recombination protein RecR (190 aa).

A C4-type zinc finger spans residues 58–73; that stretch reads CEQCGALSENELCEIC. In terms of domain architecture, Toprim spans 81–167; it reads NILCIVESPK…TFSKIAQGIP (87 aa).

The protein belongs to the RecR family.

Functionally, may play a role in DNA repair. It seems to be involved in an RecBC-independent recombinational process of DNA repair. It may act with RecF and RecO. This chain is Recombination protein RecR, found in Campylobacter jejuni subsp. jejuni serotype O:23/36 (strain 81-176).